Reading from the N-terminus, the 408-residue chain is MAVQQKRRGLSFIDAKASNVKKIAVMASTVAFEFNKATLRLRRSLHISPRSSPEVQRKATAGENSEVGSPESSLSTSRCSKRDRKLCAELSSFALYPIFGALSPSHFSSPNLLFQSEKNSSRRSFEFMQLPDTDICQIMSFLDAQSLLNLSQTCSHLRQLCLAHEDNAGKRDVTSHEITISFNQIHRRTEVRLLKRERTRTDRQFISNNIRGVLAPFSRALTKITFETTVFVTDWLDEILQLHRENRLIPLSLLFTGGALTKGHQVTGADLRSITETEFVDFVTKLQPHLQEVQLSTSRIFKISTDPSQLLGMISMLSSFGIVYERPPLHFYHEEISNAIALWKSDPLSRCCDVYMRRPHDVSSESWIKLAGSIDESRIDPYTDEVLVSQITIKHSFLVHIDLVFHFH.

Positions 49–77 (PRSSPEVQRKATAGENSEVGSPESSLSTS) are disordered. Positions 62–77 (GENSEVGSPESSLSTS) are enriched in polar residues. Positions 124-170 (SFEFMQLPDTDICQIMSFLDAQSLLNLSQTCSHLRQLCLAHEDNAGK) constitute an F-box domain.

This is an uncharacterized protein from Caenorhabditis elegans.